Here is a 212-residue protein sequence, read N- to C-terminus: ER lumen protein-retaining receptor 1 (212 aa).

Topologically, residues 1-4 (MNLF) are lumenal. The chain crosses the membrane as a helical span at residues 5 to 24 (RFLGDLSHLLAIILLLLKIW). The Cytoplasmic portion of the chain corresponds to 25-32 (KSRSCAGI). A helical transmembrane segment spans residues 33 to 52 (SGKSQVLFAVVFTARYLDLF). The tract at residues 47-48 (RY) is interaction with the K-D-E-L motif on target proteins. Topologically, residues 53–58 (TNYISL) are lumenal. A helical membrane pass occupies residues 59-79 (YNTCMKVVYIACSFTTVWLIY). Residues 80 to 92 (SKFKATYDGNHDT) lie on the Cytoplasmic side of the membrane. The helical transmembrane segment at 93–110 (FRVEFLVVPTAILAFLVN) threads the bilayer. At 111-116 (HDFTPL) the chain is on the lumenal side. The chain crosses the membrane as a helical span at residues 117-135 (EILWTFSIYLESVAILPQL). Over 136-149 (FMVSKTGEAETITS) the chain is Cytoplasmic. The helical transmembrane segment at 150 to 168 (HYLFALGVYRTLYLFNWIW) threads the bilayer. The interaction with the K-D-E-L motif on target proteins stretch occupies residues 159–169 (RTLYLFNWIWR). The Lumenal portion of the chain corresponds to 169–178 (RYHFEGFFDL). Residues 179-199 (IAIVAGLVQTVLYCDFFYLYI) traverse the membrane as a helical segment. Topologically, residues 200-212 (TKVLKGKKLSLPA) are cytoplasmic. The important for recycling of cargo proteins with the sequence motif K-D-E-L from the Golgi to the endoplasmic reticulum stretch occupies residues 204–207 (KGKK). Ser209 carries the phosphoserine; by PKA modification.

The protein belongs to the ERD2 family. In terms of assembly, upon ligand binding the receptor oligomerizes and interacts with components of the transport machinery such as ARFGAP1 and ARF1. In terms of processing, phosphorylation by PKA at Ser-209 is required for endoplasmic reticulum retention function.

The protein localises to the golgi apparatus membrane. It localises to the cytoplasmic vesicle. It is found in the COPI-coated vesicle membrane. Its subcellular location is the endoplasmic reticulum membrane. The protein resides in the endoplasmic reticulum-Golgi intermediate compartment membrane. Functionally, receptor for the C-terminal sequence motif K-D-E-L that is present on endoplasmic reticulum resident proteins and that mediates their recycling from the Golgi back to the endoplasmic reticulum. This is ER lumen protein-retaining receptor 1 (KDELR1) from Homo sapiens (Human).